A 233-amino-acid chain; its full sequence is tRNA (guanine-N(7)-)-methyltransferase (233 aa).

Positions 1–23 (MSPQDRPSRTTEAFFGRRRGKPV) are disordered. S-adenosyl-L-methionine-binding residues include Glu64, Glu89, Asp116, and Asp138. Residue Asp138 is part of the active site. Substrate is bound by residues Lys142, Asp174, and 212–215 (TRYE).

This sequence belongs to the class I-like SAM-binding methyltransferase superfamily. TrmB family.

The catalysed reaction is guanosine(46) in tRNA + S-adenosyl-L-methionine = N(7)-methylguanosine(46) in tRNA + S-adenosyl-L-homocysteine. The protein operates within tRNA modification; N(7)-methylguanine-tRNA biosynthesis. Its function is as follows. Catalyzes the formation of N(7)-methylguanine at position 46 (m7G46) in tRNA. The chain is tRNA (guanine-N(7)-)-methyltransferase from Mesorhizobium japonicum (strain LMG 29417 / CECT 9101 / MAFF 303099) (Mesorhizobium loti (strain MAFF 303099)).